A 298-amino-acid polypeptide reads, in one-letter code: Glycine--tRNA ligase alpha subunit (298 aa).

Belongs to the class-II aminoacyl-tRNA synthetase family. Tetramer of two alpha and two beta subunits.

The protein localises to the cytoplasm. It carries out the reaction tRNA(Gly) + glycine + ATP = glycyl-tRNA(Gly) + AMP + diphosphate. In Helicobacter pylori (strain J99 / ATCC 700824) (Campylobacter pylori J99), this protein is Glycine--tRNA ligase alpha subunit (glyQ).